The following is a 193-amino-acid chain: Sorting nexin-22 (193 aa).

Residues 1 to 21 are disordered; sequence MLEVHIPSVGPEAEGPRQSPE. A PX domain is found at 1–118; that stretch reads MLEVHIPSVG…HFPTDPKASN (118 aa). A 1,2-diacyl-sn-glycero-3-phospho-(1D-myo-inositol-3-phosphate)-binding residues include R43, S45, K66, and R79.

This sequence belongs to the sorting nexin family. In terms of assembly, (Microbial infection) Interacts with P.falciparum (strain 3D7) CK1. As to expression, expressed in erythrocytes (at protein level).

It is found in the cytoplasmic vesicle membrane. Its function is as follows. May be involved in several stages of intracellular trafficking. Interacts with membranes containing phosphatidylinositol 3-phosphate (PtdIns(3P)). The sequence is that of Sorting nexin-22 (SNX22) from Homo sapiens (Human).